The chain runs to 826 residues: Ubiquitin carboxyl-terminal hydrolase 16 (826 aa).

The UBP-type zinc-finger motif lies at 22–142; the sequence is PVCRHIRKGL…QVVDYVRKQA (121 aa). Residues Cys-24, His-26, Cys-48, Cys-51, Cys-74, Cys-77, Cys-82, His-90, His-94, His-103, Cys-116, and Cys-119 each coordinate Zn(2+). Residue Lys-140 forms a Glycyl lysine isopeptide (Lys-Gly) (interchain with G-Cter in SUMO2) linkage. The disordered stretch occupies residues 144–189; sequence NTTPESAEDNGNIELENKKLEKESKNEQEREKKENMARENPSMNST. Residues 158 to 180 are compositionally biased toward basic and acidic residues; the sequence is LENKKLEKESKNEQEREKKENMA. At Ser-188 the chain carries Phosphoserine. Residues 195–825 form the USP domain; sequence KGLSNLGNTC…QAYLLFYERI (631 aa). Residue Cys-204 is the Nucleophile of the active site. Residues 393 to 407 show a composition bias toward basic and acidic residues; that stretch reads SGKKSINDKNLKKTM. The tract at residues 393 to 458 is disordered; the sequence is SGKKSINDKN…QAKNQRRQQK (66 aa). Acidic residues predominate over residues 408–419; it reads EDEDKDSEEEKD. Ser-414 is modified (phosphoserine). The span at 420–429 shows a compositional bias: basic and acidic residues; sequence NDSYLKERND. A compositionally biased stretch (basic residues) spans 437-457; the sequence is HLQKKAKKQAKKQAKNQRRQQ. Residues Ser-530 and Ser-551 each carry the phosphoserine modification. The Proton acceptor role is filled by His-760.

It belongs to the peptidase C19 family. USP16 subfamily. In terms of assembly, homotetramer. Associates with late pre-40S ribosomes. Interacts with CEP78; promoting deubiquitination of tektins. Phosphorylated at the onset of mitosis and dephosphorylated during the metaphase/anaphase transition. Phosphorylation by AURKB enhances the deubiquitinase activity.

It is found in the nucleus. It carries out the reaction Thiol-dependent hydrolysis of ester, thioester, amide, peptide and isopeptide bonds formed by the C-terminal Gly of ubiquitin (a 76-residue protein attached to proteins as an intracellular targeting signal).. Its function is as follows. Specifically deubiquitinates 'Lys-120' of histone H2A (H2AK119Ub), a specific tag for epigenetic transcriptional repression, thereby acting as a coactivator. Deubiquitination of histone H2A is a prerequisite for subsequent phosphorylation at 'Ser-11' of histone H3 (H3S10ph), and is required for chromosome segregation when cells enter into mitosis. In resting B- and T-lymphocytes, phosphorylation by AURKB leads to enhance its activity, thereby maintaining transcription in resting lymphocytes. Regulates Hox gene expression via histone H2A deubiquitination. Prefers nucleosomal substrates. Does not deubiquitinate histone H2B. Also deubiquitinates non-histone proteins, such as ribosomal protein RPS27A: deubiquitination of monoubiquitinated RPS27A promotes maturation of the 40S ribosomal subunit. Also mediates deubiquitination of tektin proteins (TEKT1, TEKT2, TEK3, TEKT4 and TEKT5), promoting their stability. In Bos taurus (Bovine), this protein is Ubiquitin carboxyl-terminal hydrolase 16.